The primary structure comprises 156 residues: Endoribonuclease YbeY (156 aa).

Positions 111, 115, and 121 each coordinate Zn(2+).

This sequence belongs to the endoribonuclease YbeY family. It depends on Zn(2+) as a cofactor.

Its subcellular location is the cytoplasm. Single strand-specific metallo-endoribonuclease involved in late-stage 70S ribosome quality control and in maturation of the 3' terminus of the 16S rRNA. This is Endoribonuclease YbeY from Hahella chejuensis (strain KCTC 2396).